The following is a 96-amino-acid chain: MKPYRLSRRAKADLDDIWTYSEQRWGVEQAADYARELQATIEMIAEHPGMGQPDENLRAGYRRCASGSHVVFYRVGVRVEIIRVLHQSMNARAHLG.

Belongs to the RelE toxin family. In terms of assembly, forms a ParD1(2)-ParE1(2) heterotetramer.

Its function is as follows. Toxic component of a type II toxin-antitoxin (TA) system. Its toxic effect is neutralized by coexpression with cognate antitoxin ParD1 but no other ParD or RelB antitoxin. Low levels of wild-type toxin in the absence of antitoxin decreases the rate of cell growth, and results in death or loss of colony formation abilities and greatly elongated cells. Low levels of a mutant missing the last 4 residues leads to loss of cell division while cell elongation continues. The sequence is that of Toxin ParE1 (parE1) from Caulobacter vibrioides (strain ATCC 19089 / CIP 103742 / CB 15) (Caulobacter crescentus).